Consider the following 353-residue polypeptide: Rhodopsin (353 aa).

At 1–36 (MNGTEGPYFYIPMVNTTGIVRSPYEYPQYYLVNPAA) the chain is on the extracellular side. Residues N2 and N15 are each glycosylated (N-linked (GlcNAc...) asparagine). A helical transmembrane segment spans residues 37–61 (YAALGAYMFLLILVGFPVNFLTLYV). The Cytoplasmic portion of the chain corresponds to 62–73 (TLEHKKLRTPLN). A helical transmembrane segment spans residues 74-96 (YILLNLAVADLFMVLGGFTTTMY). The Extracellular portion of the chain corresponds to 97 to 110 (TSMHGYFVLGRLGC). The cysteines at positions 110 and 187 are disulfide-linked. Residues 111–133 (NVEGFFATLGGEIALWSLVVLAI) traverse the membrane as a helical segment. Positions 134–136 (ERW) match the 'Ionic lock' involved in activated form stabilization motif. Residues 134 to 152 (ERWVVVCKPISNFRFSEDH) are Cytoplasmic-facing. Residues 153–173 (AIMGLAFTWVMASACAVPPLV) form a helical membrane-spanning segment. Over 174 to 202 (GWSRYIPEGMQCSCGIDYYTRAEGFNNES) the chain is Extracellular. N200 is a glycosylation site (N-linked (GlcNAc...) asparagine). A helical transmembrane segment spans residues 203–224 (FVIYMFVCHFLIPLVVVFFCYG). The Cytoplasmic portion of the chain corresponds to 225–252 (RLLCAVKEAAAAQQESETTQRAEREVSR). Residues 253–274 (MVVIMVVAFLVCWCPYAGVAWY) traverse the membrane as a helical segment. The Extracellular segment spans residues 275–286 (IFTHQGSEFGPL). The chain crosses the membrane as a helical span at residues 287 to 308 (FMTFPAFFAKSSSIYNPMIYIC). K296 carries the N6-(retinylidene)lysine modification. At 309–353 (MNKQFRHCMITTLCCGKNPFEEEEGASTTSKTEASSVSSSSVSPA) the chain is on the cytoplasmic side. S-palmitoyl cysteine attachment occurs at residues C322 and C323. The segment at 330–353 (EEEGASTTSKTEASSVSSSSVSPA) is disordered. A compositionally biased stretch (low complexity) spans 334–353 (ASTTSKTEASSVSSSSVSPA).

It belongs to the G-protein coupled receptor 1 family. Opsin subfamily. Phosphorylated on some or all of the serine and threonine residues present in the C-terminal region. Post-translationally, contains one covalently linked retinal chromophore.

Its subcellular location is the membrane. It localises to the cell projection. The protein resides in the cilium. The protein localises to the photoreceptor outer segment. Its function is as follows. Photoreceptor required for image-forming vision at low light intensity. While most salt water fish species use retinal as chromophore, most freshwater fish use 3-dehydroretinal, or a mixture of retinal and 3-dehydroretinal. Light-induced isomerization of 11-cis to all-trans retinal triggers a conformational change that activates signaling via G-proteins. Subsequent receptor phosphorylation mediates displacement of the bound G-protein alpha subunit by arrestin and terminates signaling. The protein is Rhodopsin (rho) of Chelon labrosus (Thicklip grey mullet).